A 493-amino-acid chain; its full sequence is Polyamine aminopropyltransferase 2 (493 aa).

7 helical membrane-spanning segments follow: residues 9–29 (LCIF…ATLA), 32–52 (LLGN…LSMG), 68–88 (LAFV…VPIA), 101–121 (VIYG…PLAV), 137–157 (VLEK…YLFL), 161–181 (GLPL…FLLV), and 188–208 (KFLK…AVGH). Positions 187 to 448 (KKFLKFLAIF…PLNFENFELK (262 aa)) are spermidine synthase. Positions 202–437 (ATYAVGHKRI…GEWGMVIGSK (236 aa)) constitute a PABS domain. Position 233 (Q233) interacts with S-methyl-5'-thioadenosine. The spermidine site is built by H263 and D287. S-methyl-5'-thioadenosine is bound by residues D306 and 340–341 (DA). Catalysis depends on D358, which acts as the Proton acceptor.

It belongs to the spermidine/spermine synthase family. In terms of assembly, homodimer or homotetramer.

The protein resides in the cell membrane. The enzyme catalyses S-adenosyl 3-(methylsulfanyl)propylamine + putrescine = S-methyl-5'-thioadenosine + spermidine + H(+). It participates in amine and polyamine biosynthesis; spermidine biosynthesis; spermidine from putrescine: step 1/1. Its function is as follows. Catalyzes the irreversible transfer of a propylamine group from the amino donor S-adenosylmethioninamine (decarboxy-AdoMet) to putrescine (1,4-diaminobutane) to yield spermidine. This is Polyamine aminopropyltransferase 2 from Aquifex aeolicus (strain VF5).